A 220-amino-acid polypeptide reads, in one-letter code: Glutathione S-transferase-like protein FUS3 (220 aa).

In terms of domain architecture, GST N-terminal spans 3–84 (SFGTLYTYMP…YVAQSGPQAS (82 aa)). Residues 90–220 (DAMSSAKIRQ…LIEKRRIGAK (131 aa)) form the GST C-terminal domain.

The protein belongs to the GST superfamily.

Functionally, glutathione S-transferase-like protein; part of the gene cluster that mediates the biosynthesis of the mycotoxin fusarin C. Within the cluster, FUS1, FUS2, FUS8 and FUS9 are sufficient for fusarin production. The other FUS cluster members are not essential for fusarin C biosynthesis. This Gibberella moniliformis (strain M3125 / FGSC 7600) (Maize ear and stalk rot fungus) protein is Glutathione S-transferase-like protein FUS3.